The chain runs to 64 residues: Large ribosomal subunit protein bL32 (64 aa).

Belongs to the bacterial ribosomal protein bL32 family.

The polypeptide is Large ribosomal subunit protein bL32 (Flavobacterium psychrophilum (strain ATCC 49511 / DSM 21280 / CIP 103535 / JIP02/86)).